The chain runs to 140 residues: Putative pre-16S rRNA nuclease (140 aa).

It belongs to the YqgF nuclease family.

It is found in the cytoplasm. Its function is as follows. Could be a nuclease involved in processing of the 5'-end of pre-16S rRNA. This is Putative pre-16S rRNA nuclease from Enterococcus faecalis (strain ATCC 700802 / V583).